The following is a 517-amino-acid chain: MELEESGIREECGVFGCIASGDWPTQLDVPHVITLGLVGLQHRGQESAGIVTSDGSSVPKFRVHKGMGLVNHVFTEDNLKKLYVSNLGIGHTRYATTGKCELENCQPFVVETLHGKIAVAHNGELVNAARLRKKLLRHGIGLSTSSDSEMITQLLAYTPPQEQDDTPDWVARIKNLMKEAPAAYSLVIMHRDVIYAVRDPYGNRPLCIGRLMPVSDINDKEKKSSETEGWVVSSESCSFLSIGARYCHEVKPGEIVEISRHGVRTLDIIPRSNGDPVAFCIFEYVYFARPDSMFEDQMVYTVRYRCGQQLAVEAPVEADLVSTVPESATPAALGYATKCGLPYVEVLCKNRYVGRTFIQPNMRLRQLGVAKKFGVLSDNFKGKRIVLIDDSIVRGNTISPIIKLLKESGAKEVHIRVASPPIKHPCFMGINIPTKEELIANKPEFEYLAEYLGANSVVYLSVEGLVSSVQQEIKFKKQKVKKRDITIQENGNGLEYFEKTGHCTACLTGQYPVDLEW.

Methionine 1 is subject to N-acetylmethionine. The propeptide occupies 1–11; it reads MELEESGIREE. Cysteine 12 serves as the catalytic Nucleophile. The Glutamine amidotransferase type-2 domain occupies 12 to 261; the sequence is CGVFGCIASG…PGEIVEISRH (250 aa). Cysteine 280 contributes to the [4Fe-4S] cluster binding site. The Mg(2+) site is built by serine 327, aspartate 389, and aspartate 390. Residues cysteine 426, cysteine 503, and cysteine 506 each coordinate [4Fe-4S] cluster.

This sequence in the C-terminal section; belongs to the purine/pyrimidine phosphoribosyltransferase family. In terms of assembly, homotetramer. Mg(2+) serves as cofactor. [4Fe-4S] cluster is required as a cofactor. In terms of tissue distribution, expressed at a high level in brain, heart, liver and stomach.

The catalysed reaction is 5-phospho-beta-D-ribosylamine + L-glutamate + diphosphate = 5-phospho-alpha-D-ribose 1-diphosphate + L-glutamine + H2O. It participates in purine metabolism; IMP biosynthesis via de novo pathway; N(1)-(5-phospho-D-ribosyl)glycinamide from 5-phospho-alpha-D-ribose 1-diphosphate: step 1/2. Its activity is regulated as follows. Activated by the substrate 5-phospho-alpha-D-ribosyl-1-pyrophosphate and inhibited by the purine ribonucleotides, the end products of purine biosynthesis. Its function is as follows. Catalyzes the formation of phosphoribosylamine from phosphoribosylpyrophosphate (PRPP) and glutamine. The sequence is that of Amidophosphoribosyltransferase (Ppat) from Rattus norvegicus (Rat).